We begin with the raw amino-acid sequence, 931 residues long: Phosphoenolpyruvate carboxylase (931 aa).

Active-site residues include H138 and K594.

The protein belongs to the PEPCase type 1 family. It depends on Mg(2+) as a cofactor.

It catalyses the reaction oxaloacetate + phosphate = phosphoenolpyruvate + hydrogencarbonate. In terms of biological role, forms oxaloacetate, a four-carbon dicarboxylic acid source for the tricarboxylic acid cycle. The polypeptide is Phosphoenolpyruvate carboxylase (Streptococcus agalactiae serotype Ia (strain ATCC 27591 / A909 / CDC SS700)).